Consider the following 122-residue polypeptide: Holo-[acyl-carrier-protein] synthase (122 aa).

Mg(2+) is bound by residues Asp-9 and Glu-58.

The protein belongs to the P-Pant transferase superfamily. AcpS family. Mg(2+) is required as a cofactor.

The protein localises to the cytoplasm. The enzyme catalyses apo-[ACP] + CoA = holo-[ACP] + adenosine 3',5'-bisphosphate + H(+). Its function is as follows. Transfers the 4'-phosphopantetheine moiety from coenzyme A to a Ser of acyl-carrier-protein. This is Holo-[acyl-carrier-protein] synthase from Chlamydia felis (strain Fe/C-56) (Chlamydophila felis).